A 418-amino-acid polypeptide reads, in one-letter code: Alditol oxidase (418 aa).

One can recognise an FAD-binding PCMH-type domain in the interval 13 to 179; sequence ITYTAKELLR…TSLTLDLEPA (167 aa). FAD contacts are provided by residues 41–47, S106, S111, G114, 118–121, and V169; these read VLGSGHS and TGTH. At H46 the chain carries Pros-8alpha-FAD histidine. Residue S106 participates in D-sorbitol binding. S106 is a xylitol binding site. D-sorbitol contacts are provided by E320, R322, and T345. Xylitol contacts are provided by E320, R322, and T345. An FAD-binding site is contributed by R322. H372 contributes to the FAD binding site. A D-sorbitol-binding site is contributed by K375. K375 lines the xylitol pocket.

The protein belongs to the oxygen-dependent FAD-linked oxidoreductase family. Monomer. The cofactor is FAD.

It catalyses the reaction an alditol + O2 = an aldose + H2O2. The enzyme catalyses xylitol + O2 = D-xylose + H2O2. It carries out the reaction D-sorbitol + O2 = D-glucose + H2O2. In terms of biological role, oxidase that performs selective oxidation of the terminal primary hydroxyl group of several alditols, with a reduction of O2 to H2O2. Shows highest activity on xylitol and D-sorbitol, and a poor efficiency with D-mannitol and L-threitol. The sequence is that of Alditol oxidase (xyoA) from Streptomyces coelicolor (strain ATCC BAA-471 / A3(2) / M145).